The following is a 240-amino-acid chain: Ribonuclease PH (240 aa).

Residues R86 and 124 to 126 each bind phosphate; that span reads GTR.

Belongs to the RNase PH family. Homohexameric ring arranged as a trimer of dimers.

It carries out the reaction tRNA(n+1) + phosphate = tRNA(n) + a ribonucleoside 5'-diphosphate. Its function is as follows. Phosphorolytic 3'-5' exoribonuclease that plays an important role in tRNA 3'-end maturation. Removes nucleotide residues following the 3'-CCA terminus of tRNAs; can also add nucleotides to the ends of RNA molecules by using nucleoside diphosphates as substrates, but this may not be physiologically important. Probably plays a role in initiation of 16S rRNA degradation (leading to ribosome degradation) during starvation. This Rhodospirillum rubrum (strain ATCC 11170 / ATH 1.1.1 / DSM 467 / LMG 4362 / NCIMB 8255 / S1) protein is Ribonuclease PH.